The primary structure comprises 540 residues: MNKEISTADILSGGESYSGISAVEKNAKAMMKVYNAIKTSFGPLGLDKMCVDSAGEVSITNDGATILQNMLIDDPAAKILVDLATQQDHEVGDGTTSVVLIAVSLIEKGAKLIASGVHPSVVVSGYKMAFNECVQFIKKSMSKSTLNLGSKALRNVVETSISSKVISSESEVFCGIVIDALKCIESVDENRKNMYPIEDINILKHPGGSMKESFLHQGYALNCSLASNFMKRQVKKPKILCIDFGLQKYKNPLTVSIVVDDPNKLEDIRKKELEITRRQIKTIIDSGANVVLTTRGIDDMCTKLLVEADVVGIRRCKKEDLLVIAKATGTSLVSSIADISGADSISSLGFADKFEVVQIGEEECVLINGLKKKMASIILRGANCQLLDEMQRSVHDAVCVLKRTLESNSVVPGGGAVECALSLMLEKFAFTVNSKEHVAIHRYAESLLSIPKILSTNAGLDSNELVANLLSSQSREMANSSGSKFLGIDVTSGKIQDNFEFGIIEPSVNKMKSLKAATEAAISILRINEVIILPPDQSKN.

Belongs to the TCP-1 chaperonin family. As to quaternary structure, component of the T-complex protein 1 (TCP1) complex.

The protein localises to the cytoplasm. Functionally, molecular chaperone; assists the folding of proteins upon ATP hydrolysis. The polypeptide is T-complex protein 1 subunit alpha (TCP1) (Encephalitozoon cuniculi (strain GB-M1) (Microsporidian parasite)).